The primary structure comprises 545 residues: Triacylglycerol lipase ptl1 (545 aa).

In terms of domain architecture, PNPLA spans Leu182–Trp358. The GXSXG motif lies at Gly213–Gly217.

The protein resides in the lipid droplet. It carries out the reaction a triacylglycerol + H2O = a diacylglycerol + a fatty acid + H(+). Its function is as follows. Lipid particle-localized triacylglycerol (TAG) lipase. The lipid droplet/particle is a lipid storage compartment which serves as a depot of energy and building blocks for membrane lipid biosynthesis. Involved in the mobilization of the non-polar storage lipids triacylglycerols (TAGs) from lipid particles by hydrolysis of TAGs, releasing and supplying specific fatty acids to the appropriate metabolic pathways. The chain is Triacylglycerol lipase ptl1 (ptl1) from Schizosaccharomyces pombe (strain 972 / ATCC 24843) (Fission yeast).